Consider the following 589-residue polypeptide: MDLEAVREKYRQERDKRGVGRTYQFARGDFSRYARDPYTERREREPLTDEVDVAVVGAGIGGLLTGARLREETGLERIRLIDEAGDVGGTWYWNRFPGVRCDVESYVYMPLLEEIGTIPTEKYSTGPEIFAHLQRIAHRYGLYRDALFQTTVTELRWDEAAARWLVSTDRGDLFRARYVAMSIGLMHRPKLPGLPGLETFAGHSFHTSRWDFGYTGGDSTGGLTGLKDKRVGVIGTGSTTVQLAPHLAEWAERLYIFQRTPAAVDVRGNRPTPPGWADGLDAGWQQRRMENFHALTSGIPQDEDLVQDRWTQTTAELATAILPTGDTGGDPKERALAAERADFRKMEELRARIDSVVTDPATAAALKPYYRVYCKRPCFHDGYLQTFNRPNVTLVDTQGQGVERLTASGVVANGREYPVDCLIFATGYEHEFAVPYTERAGYDIVGRGGVRLSEKWAQGAHTLHGLQVHGFPNCFILSKVQAGRHVNIAYMLGEQTRHLAHIVKCVEERGHRVVEASEAGEKEWVEEILRLASGDLDFLENCTPGLYNNEGDPGGLPLLNSSYGGGSVEFVNILRRWREAGDLAGLELR.

FAD contacts are provided by residues 60 to 61, 82 to 83, 90 to 91, 102 to 103, Tyr-108, Val-152, and Met-491; these read IG, DE, TW, and DV.

This sequence belongs to the FAD-binding monooxygenase family. The cofactor is FAD.

The catalysed reaction is 1-deoxy-11-oxopentalenate + NADPH + O2 + H(+) = pentalenolactone D + NADP(+) + H2O. It participates in antibiotic biosynthesis; pentalenolactone biosynthesis. Catalyzes the flavin-dependent Baeyer-Villiger oxidation of 1-deoxy-11-oxopentalenic acid to pentalenolactone D in the biosynthesis of pentalenolactone antibiotic. This chain is Pentalenolactone D synthase (pntE), found in Streptomyces arenae.